The primary structure comprises 343 residues: MKKVVIGMSGGVDSSVSAYLLKEQGYEVIGITLNQHLEENSKDIEDTKKVCDKLGIIHEVVNIRKDFENIVIKYFLEGYNSGKTPSPCIICDDEIKFKILFDIADKYNAEYVATGHYTSVEYSEVFSKYLLKSVHSIIKDQSYMLYRLSPDKLERLIFPLKDYSKQEIREIALKIDLEVHDKKDSQGVCFAKEGYKEFLKENLRDEIVRGNFIDKNGNILGQHEGYQLYTIGQRRGLGINLSKPVFITEIKAQTNDIVLGEFSELFIDKVELINSKFSVEYEKLENLELLARPRFSSTGFYGKLIKDKNKIYFKYNEENAHNAKGQHIVFFYDGFVVGGGEIK.

Residues 7–14 (GMSGGVDS) and L33 each bind ATP. C91 functions as the Nucleophile in the catalytic mechanism. C91 and C189 form a disulfide bridge. G115 is a binding site for ATP. An interaction with tRNA region spans residues 139 to 141 (KDQ). Catalysis depends on C189, which acts as the Cysteine persulfide intermediate.

It belongs to the MnmA/TRMU family.

Its subcellular location is the cytoplasm. The catalysed reaction is S-sulfanyl-L-cysteinyl-[protein] + uridine(34) in tRNA + AH2 + ATP = 2-thiouridine(34) in tRNA + L-cysteinyl-[protein] + A + AMP + diphosphate + H(+). In terms of biological role, catalyzes the 2-thiolation of uridine at the wobble position (U34) of tRNA, leading to the formation of s(2)U34. In Fusobacterium nucleatum subsp. nucleatum (strain ATCC 25586 / DSM 15643 / BCRC 10681 / CIP 101130 / JCM 8532 / KCTC 2640 / LMG 13131 / VPI 4355), this protein is tRNA-specific 2-thiouridylase MnmA 2.